Reading from the N-terminus, the 146-residue chain is Hemoglobin subunit beta (146 aa).

Val-1 carries the post-translational modification N-acetylvaline. In terms of domain architecture, Globin spans 2 to 146 (HLTGEEKSAV…VANALAHKYH (145 aa)). Position 12 is a phosphothreonine (Thr-12). At Ser-44 the chain carries Phosphoserine. N6-acetyllysine is present on Lys-59. Position 63 (His-63) interacts with heme b. N6-acetyllysine is present on Lys-82. His-92 is a binding site for heme b. Cys-93 carries the S-nitrosocysteine modification. Lys-144 is subject to N6-acetyllysine.

This sequence belongs to the globin family. Heterotetramer of two alpha chains and two beta chains. Red blood cells.

Involved in oxygen transport from the lung to the various peripheral tissues. This Phoca vitulina (Harbor seal) protein is Hemoglobin subunit beta (HBB).